We begin with the raw amino-acid sequence, 130 residues long: Large ribosomal subunit protein bL12 (130 aa).

The segment at 94-114 is disordered; sequence MTEGLPKTVKEKTSKSDAEDT.

The protein belongs to the bacterial ribosomal protein bL12 family. In terms of assembly, homodimer. Part of the ribosomal stalk of the 50S ribosomal subunit. Forms a multimeric L10(L12)X complex, where L10 forms an elongated spine to which 2 to 4 L12 dimers bind in a sequential fashion. Binds GTP-bound translation factors.

In terms of biological role, forms part of the ribosomal stalk which helps the ribosome interact with GTP-bound translation factors. Is thus essential for accurate translation. The chain is Large ribosomal subunit protein bL12 from Chlamydia caviae (strain ATCC VR-813 / DSM 19441 / 03DC25 / GPIC) (Chlamydophila caviae).